The chain runs to 498 residues: NAC domain-containing protein 75 (498 aa).

The NAC domain maps to 48 to 215; that stretch reads LPAGVKFDPT…ELVVSKIFYQ (168 aa). The DNA-binding element occupies 166 to 221; sequence KGCKKILVLYTNFGKNRKPEKTNWVMHQYHLGTHEEEKEGELVVSKIFYQTQPRQC. Disordered stretches follow at residues 225–278, 338–374, 423–443, and 457–498; these read SSTS…PNRS, VMAEQHRHRHQPSSSTSHHMAHDHHHHHHQQQQQRHH, QQQLRQEGEEEHNDGKMGGRS, and STTH…DHHG. Positions 233 to 248 are enriched in gly residues; it reads IGGGGGEASSGGGGGE. The segment covering 256–266 has biased composition (low complexity); that stretch reads GTTSGGSCSSS. Basic residues predominate over residues 356-374; sequence HMAHDHHHHHHQQQQQRHH. A compositionally biased stretch (polar residues) spans 466 to 475; it reads GSSSMGNQQE.

As to expression, expressed in the vascular cylinder of roots. Expressed in the differentiation zone of the root stele.

It is found in the nucleus. Its function is as follows. Transcription activator involved in xylem formation. Promotes the expression of the secondary wall-associated transcription factor MYB46. Functions upstream of NAC030/VND7, a master switch of xylem vessel differentiation. Acts as a upstream regulator of NAC101/VND6 and LBD30/ASL19. This Arabidopsis thaliana (Mouse-ear cress) protein is NAC domain-containing protein 75.